The following is a 97-amino-acid chain: MNIRPLHDRVLVKRQEVELKSAGGIVLTGSAAGKSTRGTVVAVGKGRILDNGETKSLDVKIGDVVIFNEGYGAKTEKIDNEELLILTESDILAIVEE.

The protein belongs to the GroES chaperonin family. As to quaternary structure, heptamer of 7 subunits arranged in a ring. Interacts with the chaperonin GroEL.

The protein resides in the cytoplasm. In terms of biological role, together with the chaperonin GroEL, plays an essential role in assisting protein folding. The GroEL-GroES system forms a nano-cage that allows encapsulation of the non-native substrate proteins and provides a physical environment optimized to promote and accelerate protein folding. GroES binds to the apical surface of the GroEL ring, thereby capping the opening of the GroEL channel. The sequence is that of Co-chaperonin GroES from Buchnera aphidicola subsp. Pterocomma populeum.